The sequence spans 703 residues: Fibulin-1 (703 aa).

Positions 1–29 are cleaved as a signal peptide; it reads MERAAPSRRVPLPLLLLGGLALLAAGVDA. 35 disulfide bridges follow: Cys-36–Cys-61, Cys-37–Cys-68, Cys-50–Cys-69, Cys-78–Cys-109, Cys-91–Cys-110, Cys-112–Cys-136, Cys-113–Cys-143, Cys-126–Cys-144, Cys-180–Cys-190, Cys-186–Cys-199, Cys-201–Cys-214, Cys-220–Cys-233, Cys-227–Cys-242, Cys-248–Cys-260, Cys-266–Cys-279, Cys-273–Cys-288, Cys-294–Cys-306, Cys-312–Cys-325, Cys-319–Cys-334, Cys-341–Cys-354, Cys-360–Cys-373, Cys-367–Cys-382, Cys-384–Cys-397, Cys-403–Cys-415, Cys-411–Cys-424, Cys-426–Cys-439, Cys-445–Cys-454, Cys-450–Cys-463, Cys-465–Cys-479, Cys-485–Cys-498, Cys-494–Cys-507, Cys-509–Cys-523, Cys-529–Cys-542, Cys-536–Cys-551, and Cys-556–Cys-577. Anaphylatoxin-like domains lie at 36–76, 77–111, and 112–144; these read CCAD…LEEL, HCAT…RCCH, and CCLL…QACC. Asn-98 carries N-linked (GlcNAc...) (complex) asparagine glycosylation. An EGF-like 1 domain is found at 176-215; that stretch reads LNDRCRGGGPCKQQCRDTGDEVVCSCFVGYQLLSDGVSCE. The EGF-like 2; calcium-binding domain maps to 216–261; it reads DVNECITGSHSCRLGESCINTVGSFRCQRDSSCGTGYELTEDNSCK. Residues 262–307 enclose the EGF-like 3; calcium-binding domain; the sequence is DIDECESGIHNCLPDFICQNTLGSFRCRPKLQCKSGFIQDALGNCI. One can recognise an EGF-like 4; calcium-binding domain in the interval 308–355; that stretch reads DINECLSISAPCPIGHTCINTEGSYTCQKNVPNCGRGYHLNEEGTRCV. The EGF-like 5; calcium-binding domain occupies 356-398; the sequence is DVDECAPPAEPCGKGHRCVNSPGSFRCECKTGYYFDGISRMCV. The interval 356 to 440 is self-association and FN1-binding; calcium is necessary for homotypic binding, but not for heterotypic binding; sequence DVDECAPPAE…RLSVDGRSCE (85 aa). An EGF-like 6; calcium-binding domain is found at 399–440; the sequence is DVNECQRYPGRLCGHKCENTLGSYLCSCSVGFRLSVDGRSCE. The EGF-like 7; calcium-binding domain occupies 441–480; that stretch reads DINECSSSPCSQECANVYGSYQCYCRRGYQLSDVDGVTCE. The region spanning 481 to 524 is the EGF-like 8; calcium-binding domain; the sequence is DIDECALPTGGHICSYRCINIPGSFQCSCPSSGYRLAPNGRNCQ. In terms of domain architecture, EGF-like 9; calcium-binding spans 525 to 578; sequence DIDECVTGIHNCSINETCFNIQGGFRCLAFECPENYRRSAATLQQEKTDTVRCI. Asn-535 and Asn-539 each carry an N-linked (GlcNAc...) asparagine glycan.

Belongs to the fibulin family. Homomultimerizes and interacts with various extracellular matrix components such as FN1, LAMA1, LAMA2, NID, ACAN, CSPG2 and type IV collagen. Also interacts with APP and FGB. Interacts with FBLN7. Interacts with CCN3. In terms of assembly, (Microbial infection) Interacts with human papillomavirus/HPV type 16, 18 and 31 proteins E6. In terms of tissue distribution, isoform A and isoform B are only expressed in placenta. Isoform C and isoform D are expressed in a variety of tissues and cultured cells.

The protein resides in the secreted. Its subcellular location is the extracellular space. The protein localises to the extracellular matrix. Incorporated into fibronectin-containing matrix fibers. May play a role in cell adhesion and migration along protein fibers within the extracellular matrix (ECM). Could be important for certain developmental processes and contribute to the supramolecular organization of ECM architecture, in particular to those of basement membranes. Has been implicated in a role in cellular transformation and tumor invasion, it appears to be a tumor suppressor. May play a role in haemostasis and thrombosis owing to its ability to bind fibrinogen and incorporate into clots. Could play a significant role in modulating the neurotrophic activities of APP, particularly soluble APP. This is Fibulin-1 (FBLN1) from Homo sapiens (Human).